Here is a 116-residue protein sequence, read N- to C-terminus: Small ribosomal subunit protein bS6 (116 aa).

Positions 94–116 (ESITEPSPLTKPKEDRKGDSEAA) are disordered. The segment covering 104-116 (KPKEDRKGDSEAA) has biased composition (basic and acidic residues).

The protein belongs to the bacterial ribosomal protein bS6 family.

In terms of biological role, binds together with bS18 to 16S ribosomal RNA. The sequence is that of Small ribosomal subunit protein bS6 from Idiomarina loihiensis (strain ATCC BAA-735 / DSM 15497 / L2-TR).